The primary structure comprises 500 residues: Galactofuranose transporter ATP-binding protein YtfR (500 aa).

2 consecutive ABC transporter domains span residues 10–245 (LRTE…LGRE) and 259–497 (LSDK…IMNA). 42–49 (GENGAGKS) provides a ligand contact to ATP.

Belongs to the ABC transporter superfamily. In terms of assembly, the complex is composed of two ATP-binding proteins (YtfR), two transmembrane proteins (YtfT and YjfF) and a solute-binding protein (YtfQ).

Its subcellular location is the cell inner membrane. The catalysed reaction is D-galactofuranose(out) + ATP + H2O = D-galactofuranose(in) + ADP + phosphate + H(+). Functionally, part of the ABC transporter complex YtfQRT-YjfF involved in galactofuranose transport. Responsible for energy coupling to the transport system. In Escherichia coli O157:H7, this protein is Galactofuranose transporter ATP-binding protein YtfR (ytfR).